A 323-amino-acid polypeptide reads, in one-letter code: Arginase-1 (323 aa).

The segment at 1 to 27 (MSSKPKPIEIIGAPFSKGQPRGGVEKG) is disordered. N6-succinyllysine is present on Lys17. Phosphoserine occurs at positions 62 and 72. Residue Lys75 is modified to N6-succinyllysine. His101, Asp124, His126, and Asp128 together coordinate Mn(2+). Residues 126–130 (HTDIN) and 137–139 (SGN) contribute to the substrate site. Ser163 carries the post-translational modification Phosphoserine. Asp183 contacts substrate. Ser217 carries the post-translational modification Phosphoserine. The Mn(2+) site is built by Asp232 and Asp234. Substrate is bound by residues Thr246 and Glu277. Thr281 carries the phosphothreonine modification.

It belongs to the arginase family. Homotrimer. Interacts with CMTM6. The cofactor is Mn(2+). Detected in liver (at protein level).

The protein localises to the cytoplasm. It is found in the cytoplasmic granule. The enzyme catalyses L-arginine + H2O = urea + L-ornithine. It functions in the pathway nitrogen metabolism; urea cycle; L-ornithine and urea from L-arginine: step 1/1. Inactivated by diethyl pyrocarbonate (DEPC). In terms of biological role, key element of the urea cycle converting L-arginine to urea and L-ornithine, which is further metabolized into metabolites proline and polyamides that drive collagen synthesis and bioenergetic pathways critical for cell proliferation, respectively; the urea cycle takes place primarily in the liver and, to a lesser extent, in the kidneys. Functions in L-arginine homeostasis in nonhepatic tissues characterized by the competition between nitric oxide synthase (NOS) and arginase for the available intracellular substrate arginine. Arginine metabolism is a critical regulator of innate and adaptive immune responses. Involved in an antimicrobial effector pathway in polymorphonuclear granulocytes (PMN). Upon PMN cell death is liberated from the phagolysosome and depletes arginine in the microenvironment leading to suppressed T cell and natural killer (NK) cell proliferation and cytokine secretion. In group 2 innate lymphoid cells (ILC2s) promotes acute type 2 inflammation in the lung and is involved in optimal ILC2 proliferation but not survival. Plays a role in the immune response of alternatively activated or M2 macrophages in processes such as wound healing and tissue regeneration, immune defense against multicellular pathogens and parasites, and immune suppression and allergic inflammation; the regulatory outcome seems to be organ specific. In tumor-infiltrating dendritic cells (DCs) and myeloid-derived suppressor cells (MDSCs) plays a role in suppression of T cell-mediated antitumor immunity. This chain is Arginase-1 (Arg1), found in Rattus norvegicus (Rat).